The chain runs to 151 residues: Deoxyuridine 5'-triphosphate nucleotidohydrolase (151 aa).

Residues 70-72, Asn-83, 87-89, and Met-97 contribute to the substrate site; these read RSG and LID.

This sequence belongs to the dUTPase family. It depends on Mg(2+) as a cofactor.

It catalyses the reaction dUTP + H2O = dUMP + diphosphate + H(+). The protein operates within pyrimidine metabolism; dUMP biosynthesis; dUMP from dCTP (dUTP route): step 2/2. Its function is as follows. This enzyme is involved in nucleotide metabolism: it produces dUMP, the immediate precursor of thymidine nucleotides and it decreases the intracellular concentration of dUTP so that uracil cannot be incorporated into DNA. In Yersinia pseudotuberculosis serotype O:1b (strain IP 31758), this protein is Deoxyuridine 5'-triphosphate nucleotidohydrolase.